Here is a 179-residue protein sequence, read N- to C-terminus: Ribulose bisphosphate carboxylase small subunit, chloroplastic 1/4 (179 aa).

The transit peptide at 1–58 directs the protein to the chloroplast; sequence MAASSTMLSSVATAACAAPAQASMVAPFVGLKSTSAFPVTQKPATGLSTLPSNGGRVQ.

The protein belongs to the RuBisCO small chain family. Heterohexadecamer of 8 large and 8 small subunits.

The protein resides in the plastid. Its subcellular location is the chloroplast. In terms of biological role, ruBisCO catalyzes two reactions: the carboxylation of D-ribulose 1,5-bisphosphate, the primary event in carbon dioxide fixation, as well as the oxidative fragmentation of the pentose substrate. Both reactions occur simultaneously and in competition at the same active site. Although the small subunit is not catalytic it is essential for maximal activity. The protein is Ribulose bisphosphate carboxylase small subunit, chloroplastic 1/4 (RBCS1) of Fritillaria agrestis (Stinkbells).